A 790-amino-acid polypeptide reads, in one-letter code: Eukaryotic translation initiation factor 3 subunit C (790 aa).

The tract at residues M1–F62 is disordered. A compositionally biased stretch (acidic residues) spans S14–D53. The 173-residue stretch at F556–S728 folds into the PCI domain. Residues N748–F790 are disordered. Residues T751–S770 show a composition bias toward polar residues.

The protein belongs to the eIF-3 subunit C family. Component of the eukaryotic translation initiation factor 3 (eIF-3) complex.

Its subcellular location is the cytoplasm. Component of the eukaryotic translation initiation factor 3 (eIF-3) complex, which is involved in protein synthesis of a specialized repertoire of mRNAs and, together with other initiation factors, stimulates binding of mRNA and methionyl-tRNAi to the 40S ribosome. The eIF-3 complex specifically targets and initiates translation of a subset of mRNAs involved in cell proliferation. This is Eukaryotic translation initiation factor 3 subunit C from Lodderomyces elongisporus (strain ATCC 11503 / CBS 2605 / JCM 1781 / NBRC 1676 / NRRL YB-4239) (Yeast).